Consider the following 469-residue polypeptide: 3-isopropylmalate dehydratase large subunit (469 aa).

[4Fe-4S] cluster-binding residues include Cys-350, Cys-410, and Cys-413.

The protein belongs to the aconitase/IPM isomerase family. LeuC type 1 subfamily. Heterodimer of LeuC and LeuD. [4Fe-4S] cluster serves as cofactor.

The enzyme catalyses (2R,3S)-3-isopropylmalate = (2S)-2-isopropylmalate. It participates in amino-acid biosynthesis; L-leucine biosynthesis; L-leucine from 3-methyl-2-oxobutanoate: step 2/4. Functionally, catalyzes the isomerization between 2-isopropylmalate and 3-isopropylmalate, via the formation of 2-isopropylmaleate. The chain is 3-isopropylmalate dehydratase large subunit from Rhizobium johnstonii (strain DSM 114642 / LMG 32736 / 3841) (Rhizobium leguminosarum bv. viciae).